The primary structure comprises 287 residues: 4-hydroxybenzoate octaprenyltransferase (287 aa).

Helical transmembrane passes span 21–41 (VGIFLLLWPTLWAVWIAAKGA), 44–64 (FKIAVIFIAGSVVMRAAGCIV), 91–111 (VTEAMLLFAVLSLIAFTLVLL), 112–132 (LNRLTVELAVIGILLALVYPF), 139–159 (LPQLWLGIAFSWSIPMAFAAT), 160–180 (VGHVPAVAWLLFFAAVLWPIV), 211–231 (LMIGLLQGSVLLTFGLLGWYL), 235–255 (YWFYLGLLVALGLMCYQQFLI), and 263–283 (CFAAFRNNNWVGFFIFLGILL).

Belongs to the UbiA prenyltransferase family. Mg(2+) is required as a cofactor.

The protein resides in the cell inner membrane. It carries out the reaction all-trans-octaprenyl diphosphate + 4-hydroxybenzoate = 4-hydroxy-3-(all-trans-octaprenyl)benzoate + diphosphate. The protein operates within cofactor biosynthesis; ubiquinone biosynthesis. In terms of biological role, catalyzes the prenylation of para-hydroxybenzoate (PHB) with an all-trans polyprenyl group. Mediates the second step in the final reaction sequence of ubiquinone-8 (UQ-8) biosynthesis, which is the condensation of the polyisoprenoid side chain with PHB, generating the first membrane-bound Q intermediate 3-octaprenyl-4-hydroxybenzoate. The chain is 4-hydroxybenzoate octaprenyltransferase from Coxiella burnetii (strain CbuK_Q154) (Coxiella burnetii (strain Q154)).